The following is an 874-amino-acid chain: Alanine--tRNA ligase (874 aa).

The Zn(2+) site is built by His-562, His-566, Cys-665, and His-669.

It belongs to the class-II aminoacyl-tRNA synthetase family. It depends on Zn(2+) as a cofactor.

The protein resides in the cytoplasm. It carries out the reaction tRNA(Ala) + L-alanine + ATP = L-alanyl-tRNA(Ala) + AMP + diphosphate. Its function is as follows. Catalyzes the attachment of alanine to tRNA(Ala) in a two-step reaction: alanine is first activated by ATP to form Ala-AMP and then transferred to the acceptor end of tRNA(Ala). Also edits incorrectly charged Ser-tRNA(Ala) and Gly-tRNA(Ala) via its editing domain. The polypeptide is Alanine--tRNA ligase (Pseudomonas fluorescens (strain ATCC BAA-477 / NRRL B-23932 / Pf-5)).